The chain runs to 537 residues: Protoporphyrinogen oxidase 1, chloroplastic (537 aa).

Residues 1–34 constitute a chloroplast transit peptide; the sequence is MELSLLRPTTQSLLPSFSKPNLRLNVYKPLRLRC. Position 35 is an N-acetylserine (serine 35). Residues 63 to 68, 90 to 91, and 112 to 115 each bind FAD; these read GGGISG, EA, and GPNS. The segment covering 256–268 has biased composition (basic and acidic residues); the sequence is RKNAPKAERDPRL. The tract at residues 256–275 is disordered; the sequence is RKNAPKAERDPRLPKPQGQT. 511 to 513 lines the FAD pocket; the sequence is VAL.

This sequence belongs to the protoporphyrinogen/coproporphyrinogen oxidase family. Protoporphyrinogen oxidase subfamily. FAD serves as cofactor. In terms of tissue distribution, expressed at high levels in the leaves and at low levels in the roots and floral buds.

Its subcellular location is the plastid. The protein localises to the chloroplast. The enzyme catalyses protoporphyrinogen IX + 3 O2 = protoporphyrin IX + 3 H2O2. It participates in porphyrin-containing compound metabolism; protoporphyrin-IX biosynthesis; protoporphyrin-IX from protoporphyrinogen-IX: step 1/1. It functions in the pathway porphyrin-containing compound metabolism; chlorophyll biosynthesis. Its activity is regulated as follows. Inhibited by acifluorfen. Functionally, catalyzes the 6-electron oxidation of protoporphyrinogen-IX to form protoporphyrin-IX. This is Protoporphyrinogen oxidase 1, chloroplastic (PPOX1) from Arabidopsis thaliana (Mouse-ear cress).